The following is an 85-amino-acid chain: Small ribosomal subunit protein uS17 (85 aa).

It belongs to the universal ribosomal protein uS17 family. In terms of assembly, part of the 30S ribosomal subunit.

In terms of biological role, one of the primary rRNA binding proteins, it binds specifically to the 5'-end of 16S ribosomal RNA. The polypeptide is Small ribosomal subunit protein uS17 (Mesoplasma florum (strain ATCC 33453 / NBRC 100688 / NCTC 11704 / L1) (Acholeplasma florum)).